The sequence spans 88 residues: Large ribosomal subunit protein eL31 (88 aa).

It belongs to the eukaryotic ribosomal protein eL31 family.

The polypeptide is Large ribosomal subunit protein eL31 (Methanoregula boonei (strain DSM 21154 / JCM 14090 / 6A8)).